Consider the following 732-residue polypeptide: 1,4-alpha-glucan branching enzyme GlgB (732 aa).

Aspartate 409 functions as the Nucleophile in the catalytic mechanism. The active-site Proton donor is the glutamate 462.

Belongs to the glycosyl hydrolase 13 family. GlgB subfamily. As to quaternary structure, monomer.

It carries out the reaction Transfers a segment of a (1-&gt;4)-alpha-D-glucan chain to a primary hydroxy group in a similar glucan chain.. The protein operates within glycan biosynthesis; glycogen biosynthesis. Its function is as follows. Catalyzes the formation of the alpha-1,6-glucosidic linkages in glycogen by scission of a 1,4-alpha-linked oligosaccharide from growing alpha-1,4-glucan chains and the subsequent attachment of the oligosaccharide to the alpha-1,6 position. In Corynebacterium diphtheriae (strain ATCC 700971 / NCTC 13129 / Biotype gravis), this protein is 1,4-alpha-glucan branching enzyme GlgB.